The following is a 453-amino-acid chain: Bis(5'-adenosyl)-triphosphatase ENPP4 (453 aa).

The N-terminal stretch at 1-18 is a signal peptide; it reads MKLLLMLLFSGLMTGCRG. At 19–407 the chain is on the extracellular side; the sequence is NSSSASPPKL…DQWCINLPEA (389 aa). 2 residues coordinate Zn(2+): aspartate 34 and threonine 70. Catalysis depends on threonine 70, which acts as the AMP-threonine intermediate. The substrate site is built by asparagine 91 and tyrosine 154. An N-linked (GlcNAc...) asparagine glycan is attached at asparagine 166. Aspartate 189, histidine 193, aspartate 237, and histidine 238 together coordinate Zn(2+). Residue aspartate 189 coordinates substrate. The cysteines at positions 254 and 287 are disulfide-linked. Residue asparagine 276 is glycosylated (N-linked (GlcNAc...) asparagine). A Zn(2+)-binding site is contributed by histidine 336. Cysteine 394 and cysteine 401 are joined by a disulfide. The helical transmembrane segment at 408–428 threads the bilayer; the sequence is IGIVIGALLVLTTLTCLIIIM. At 429–453 the chain is on the cytoplasmic side; that stretch reads QNRVSGPRPFSRLQLQEDDDDPLIG.

This sequence belongs to the nucleotide pyrophosphatase/phosphodiesterase family. It depends on Zn(2+) as a cofactor.

The protein localises to the cell membrane. It catalyses the reaction P(1),P(3)-bis(5'-adenosyl) triphosphate + H2O = AMP + ADP + 2 H(+). Functionally, hydrolyzes extracellular Ap3A into AMP and ADP, and Ap4A into AMP and ATP. Ap3A and Ap4A are diadenosine polyphosphates thought to induce proliferation of vascular smooth muscle cells. Acts as a procoagulant, mediating platelet aggregation at the site of nascent thrombus via release of ADP from Ap3A and activation of ADP receptors. The protein is Bis(5'-adenosyl)-triphosphatase ENPP4 (ENPP4) of Bos taurus (Bovine).